The sequence spans 431 residues: Dihydroorotase (431 aa).

Zn(2+)-binding residues include His59 and His61. Residues 61–63 (HLR) and Asn93 contribute to the substrate site. Zn(2+) contacts are provided by Asp151, His178, His231, and Asp304. Asp304 is a catalytic residue. Substrate-binding positions include His308 and 322–323 (FG).

It belongs to the metallo-dependent hydrolases superfamily. DHOase family. Class I DHOase subfamily. It depends on Zn(2+) as a cofactor.

It carries out the reaction (S)-dihydroorotate + H2O = N-carbamoyl-L-aspartate + H(+). It functions in the pathway pyrimidine metabolism; UMP biosynthesis via de novo pathway; (S)-dihydroorotate from bicarbonate: step 3/3. Catalyzes the reversible cyclization of carbamoyl aspartate to dihydroorotate. The protein is Dihydroorotase of Caldanaerobacter subterraneus subsp. tengcongensis (strain DSM 15242 / JCM 11007 / NBRC 100824 / MB4) (Thermoanaerobacter tengcongensis).